We begin with the raw amino-acid sequence, 239 residues long: Large ribosomal subunit protein eL32 (239 aa).

2 stretches are compositionally biased toward acidic residues: residues 1–12 (MSDENDTPEELA) and 67–91 (VEAD…ADVE). 2 disordered regions span residues 1 to 23 (MSDE…SKAE) and 64 to 178 (GLEV…HPSG). The span at 92-113 (TELRARGLTEKTPDLSEDEQRL) shows a compositional bias: basic and acidic residues. The span at 130-155 (YHKKKRTPTSWRRPKGTLSKQRRGIK) shows a compositional bias: basic residues.

This sequence belongs to the eukaryotic ribosomal protein eL32 family.

This Halobacterium salinarum (strain ATCC 700922 / JCM 11081 / NRC-1) (Halobacterium halobium) protein is Large ribosomal subunit protein eL32 (rpl32e).